A 347-amino-acid chain; its full sequence is HTH-type transcriptional regulator PhcA (347 aa).

The HTH lysR-type domain occupies 1 to 61 (MVNVDTKLLV…IRVPHGLTPT (61 aa)). The segment at residues 21–40 (ATYVAEKMHMTAPAVSHSLG) is a DNA-binding region (H-T-H motif). A disordered region spans residues 316–347 (PMHPPMLTDDSGKSGKTGKGDAEKEDESRLSV). Basic and acidic residues predominate over residues 325-347 (DSGKSGKTGKGDAEKEDESRLSV).

This sequence belongs to the LysR transcriptional regulatory family.

Functionally, regulates the transcription of one or more of the genes involved in virulence. The chain is HTH-type transcriptional regulator PhcA (phcA) from Ralstonia nicotianae (strain ATCC BAA-1114 / GMI1000) (Ralstonia solanacearum).